The sequence spans 365 residues: Dehydroprecondylocarpine acetate synthase (365 aa).

Positions 105, 108, 111, and 119 each coordinate Zn(2+). Residues asparagine 142 and asparagine 147 are each glycosylated (N-linked (GlcNAc...) asparagine). Leucine 194, glycine 196, leucine 197, serine 216, threonine 217, threonine 218, lysine 221, leucine 279, alanine 281, serine 303, alanine 305, and arginine 350 together coordinate NADP(+).

It belongs to the zinc-containing alcohol dehydrogenase family. In terms of assembly, homodimer. Interaction with catharanthine synthase (CS) and tabersonine synthase (TS). Requires Zn(2+) as cofactor.

The protein localises to the cytoplasm. It is found in the cytosol. The enzyme catalyses dihydroprecondylocarpine acetate + NADP(+) = precondylocarpine acetate + NADPH + H(+). The protein operates within alkaloid biosynthesis. Component of the seco-iridoid and derivatives monoterpenoid indole alkaloids (MIAs, e.g. vinblastine, catharanthine, tabersonine, vincadifformine, vindoline, vincristine, quinine and strychnine) biosynthesis pathway. Catalyzes the non-canonical 1,4-reduction of an alpha,beta-unsaturated iminium moiety; by contrast with the classic alcohol dehydrogenase mechanism, this reaction does not require a catalytic zinc or proton relay. Converts precondylocarpine acetate to dihydroprecondylocarpine acetate, that is spontaneously converted into dehydrosecodine intermediate, precursor of angryline. May also trigger the non-stereoselective 1,4-reduction reaction at C15 of dehydrosecodine leading to the production of secodine, a precursor of vincadifformine. In Catharanthus roseus (Madagascar periwinkle), this protein is Dehydroprecondylocarpine acetate synthase.